Reading from the N-terminus, the 404-residue chain is GTPase Obg (404 aa).

The Obg domain maps to 1 to 159; that stretch reads MKFIDEARIE…RALRLELKVL (159 aa). The tract at residues 22–43 is disordered; sequence SFRREKFIPRGGPDGGDGGRGG. A compositionally biased stretch (gly residues) spans 33–43; that stretch reads GPDGGDGGRGG. The 175-residue stretch at 160 to 334 folds into the OBG-type G domain; that stretch reads ADVGLLGMPN…LVFAIQDFLD (175 aa). GTP is bound by residues 166–173, 191–195, 213–216, 284–287, and 315–317; these read GMPNAGKS, FTTLA, DIPG, NKLD, and SAL. S173 and T193 together coordinate Mg(2+). The segment at 373 to 404 is disordered; that stretch reads LLAEGETGTGDDGRDGNENDPADEQDTNRPNH.

The protein belongs to the TRAFAC class OBG-HflX-like GTPase superfamily. OBG GTPase family. Monomer. Mg(2+) is required as a cofactor.

It localises to the cytoplasm. An essential GTPase which binds GTP, GDP and possibly (p)ppGpp with moderate affinity, with high nucleotide exchange rates and a fairly low GTP hydrolysis rate. Plays a role in control of the cell cycle, stress response, ribosome biogenesis and in those bacteria that undergo differentiation, in morphogenesis control. This Aromatoleum aromaticum (strain DSM 19018 / LMG 30748 / EbN1) (Azoarcus sp. (strain EbN1)) protein is GTPase Obg.